Consider the following 140-residue polypeptide: Profilin (140 aa).

S2 bears the N-acetylserine mark.

It belongs to the profilin family. As to quaternary structure, occurs in many kinds of cells as a complex with monomeric actin in a 1:1 ratio.

It is found in the cytoplasm. It localises to the cytoskeleton. Binds to actin and affects the structure of the cytoskeleton. At high concentrations, profilin prevents the polymerization of actin, whereas it enhances it at low concentrations. By binding to PIP2, it inhibits the formation of IP3 and DG. In Heliocidaris crassispina (Sea urchin), this protein is Profilin.